Here is a 181-residue protein sequence, read N- to C-terminus: MKQKILIRVTMTDDKTRAKAMTKAVQFKGVSAVEIKGDHRNQIEVTGVEVDMIPLIQILRKKVAFAELVSVTKVEPPKKEDEKKGGDGKGAEGKGGDQKGGDKKGPDDKEPPEPKPVPCYPWPLQGYGVPSSFPHQGYGVPSTFPQGDGVPSSFPYPCHPAHPYNDIGEPVYNHEPNCKIM.

One can recognise an HMA domain in the interval 2 to 71 (KQKILIRVTM…KVAFAELVSV (70 aa)). The segment at 74–121 (VEPPKKEDEKKGGDGKGAEGKGGDQKGGDKKGPDDKEPPEPKPVPCYP) is disordered. Positions 75–113 (EPPKKEDEKKGGDGKGAEGKGGDQKGGDKKGPDDKEPPE) are enriched in basic and acidic residues. Position 178 is a cysteine methyl ester (Cys-178). Residue Cys-178 is the site of S-farnesyl cysteine attachment. Positions 179-181 (KIM) are cleaved as a propeptide — removed in mature form.

It belongs to the HIPP family.

Probable heavy-metal-binding protein. The protein is Heavy metal-associated isoprenylated plant protein 46 of Arabidopsis thaliana (Mouse-ear cress).